The chain runs to 214 residues: A-type ATP synthase subunit D (214 aa).

This sequence belongs to the V-ATPase D subunit family. Has multiple subunits with at least A(3), B(3), C, D, E, F, H, I and proteolipid K(x).

It is found in the cell membrane. In terms of biological role, component of the A-type ATP synthase that produces ATP from ADP in the presence of a proton gradient across the membrane. The polypeptide is A-type ATP synthase subunit D (Thermococcus kodakarensis (strain ATCC BAA-918 / JCM 12380 / KOD1) (Pyrococcus kodakaraensis (strain KOD1))).